A 609-amino-acid polypeptide reads, in one-letter code: Zinc metalloproteinase-disintegrin-like VAP2B (609 aa).

Positions 1–20 (MIQVLLVTICLAAFPYQGSS) are cleaved as a signal peptide. Positions 21–189 (IILESGNVND…KKASQLVVTA (169 aa)) are excised as a propeptide. E190 is modified (pyrrolidone carboxylic acid (Glu)). The Peptidase M12B domain occupies 198 to 393 (RFVELFLVVD…HNPECILNEP (196 aa)). Residues E201 and D285 each contribute to the Ca(2+) site. Disulfide bonds link C308–C388, C348–C372, and C350–C355. H333 lines the Zn(2+) pocket. E334 is an active-site residue. Residues H337 and H343 each coordinate Zn(2+). N-linked (GlcNAc...) asparagine glycosylation occurs at N371. Residues C388, N391, V403, N406, L408, E410, E413, and D416 each coordinate Ca(2+). The region spanning 401 to 487 (PPVCGNELLE…ECPADVFHKN (87 aa)) is the Disintegrin domain. 22 cysteine pairs are disulfide-bonded: C404-C423, C404-C433, C415-C428, C415-C433, C417-C423, C427-C450, C441-C447, C446-C472, C459-C479, C466-C491, C466-C498, C491-C503, C498-C503, C510-C525, C510-C560, C525-C571, C538-C548, C548-C555, C555-C597, C560-C571, C591-C602, and C597-C602. The interval 459-472 (CRASMSECDPAEHC) is inhibits platelet aggregation. The D/ECD-tripeptide motif lies at 465–467 (ECD). Residues D467, P468, E470, D482, and V483 each contribute to the Ca(2+) site.

It belongs to the venom metalloproteinase (M12B) family. P-III subfamily. P-IIIb sub-subfamily. Monomer or heterodimer; non-covalently linked. Interacts with fibrillar collagen. It depends on Zn(2+) as a cofactor. Post-translationally, the N-terminus is blocked. In terms of tissue distribution, expressed by the venom gland.

It localises to the secreted. Functionally, zinc metalloprotease that abolishes platelet aggregation induced by collagen, but has no effect on platelet aggregation induced by ADP or thromboxane analog. This inhibition may be due to its ability to bind collagen and block the binding site on collagen for platelets and/or to its ability to bind to the platelet alpha-2/beta-1 collagen receptor (ITGA2/ITGB1) to block its interaction with collagen and hence prevent platelet stimulation. In terms of biological role, abolishes platelet aggregation induced by collagen (IC(50)=66 nM) but not ADP-stimulated platelet aggregation. This inhibition may be due to its ability to bind collagen and block the binding site on collagen for platelets and/or to its ability to bind to the platelet alpha-2/beta-1 collagen receptor (ITGA2/ITGB1) to block its interaction with collagen and hence prevent platelet stimulation. This Crotalus atrox (Western diamondback rattlesnake) protein is Zinc metalloproteinase-disintegrin-like VAP2B.